The chain runs to 163 residues: NADH-quinone oxidoreductase subunit I (163 aa).

2 4Fe-4S ferredoxin-type domains span residues 54-84 (LRRYPNGEERCIACKLCEAVCPAQAITIDAE) and 94-123 (TRYDIDMTKCIYCGFCQEACPVDAIVEGPN). [4Fe-4S] cluster contacts are provided by Cys-64, Cys-67, Cys-70, Cys-74, Cys-103, Cys-106, Cys-109, and Cys-113.

Belongs to the complex I 23 kDa subunit family. NDH-1 is composed of at least 14 different subunits, Nqo1 to Nqo14. The complex has a L-shaped structure, with the hydrophobic arm (subunits Nqo7, Nqo8, Nqo10 to Nqo14) embedded in the inner membrane and the hydrophilic peripheral arm (subunits Nqo1 to Nqo6, Nqo9) protruding into the bacterial cytoplasm. The hydrophilic domain contains all the redox centers. NADH-quinone oxidoreductase forms a supercomplex with ubiquinol-cytochrome c reductase complex (complex III or cytochrome b-c1 complex) and cytochrome c oxidase (complex IV), which stabilizes the NADH-quinone oxidoreductase complex. It depends on [4Fe-4S] cluster as a cofactor.

It is found in the cell inner membrane. The catalysed reaction is a quinone + NADH + 5 H(+)(in) = a quinol + NAD(+) + 4 H(+)(out). Functionally, NDH-1 shuttles electrons from NADH, via FMN and iron-sulfur (Fe-S) centers, to quinones in the respiratory chain. The immediate electron acceptor for the enzyme in this species is believed to be ubiquinone. Couples the redox reaction to proton translocation (for every two electrons transferred, four hydrogen ions are translocated across the cytoplasmic membrane), and thus conserves the redox energy in a proton gradient. This chain is NADH-quinone oxidoreductase subunit I, found in Paracoccus denitrificans (strain Pd 1222).